Here is a 152-residue protein sequence, read N- to C-terminus: Deoxyuridine 5'-triphosphate nucleotidohydrolase (152 aa).

Substrate is bound by residues 71 to 73 (RSG), N84, 88 to 90 (LID), and M98.

This sequence belongs to the dUTPase family. Requires Mg(2+) as cofactor.

It catalyses the reaction dUTP + H2O = dUMP + diphosphate + H(+). Its pathway is pyrimidine metabolism; dUMP biosynthesis; dUMP from dCTP (dUTP route): step 2/2. In terms of biological role, this enzyme is involved in nucleotide metabolism: it produces dUMP, the immediate precursor of thymidine nucleotides and it decreases the intracellular concentration of dUTP so that uracil cannot be incorporated into DNA. In Shewanella piezotolerans (strain WP3 / JCM 13877), this protein is Deoxyuridine 5'-triphosphate nucleotidohydrolase.